An 860-amino-acid chain; its full sequence is Receptor-like protein 31 (860 aa).

An N-terminal signal peptide occupies residues 1–23; that stretch reads MMIPSQSCFCFFFMVSFFLHTLA. Residues 24 to 809 lie on the Extracellular side of the membrane; the sequence is SPTLRHCRHD…SEPEEHVINW (786 aa). Asn49, Asn64, Asn88, Asn95, Asn112, Asn117, Asn154, Asn178, Asn202, and Asn213 each carry an N-linked (GlcNAc...) asparagine glycan. LRR repeat units follow at residues 108–131, 132–155, 156–179, 181–202, 203–226, and 227–251; these read QHLH…LGNL, FRLT…IGNL, SRLT…IGNL, QLEY…TFSN, LTKL…DMSG, and FQNL…LFTI. One copy of the LRR 7; degenerate repeat lies at 252 to 276; it reads PSLRWANLEGNMFKGPIEFRNMYSP. LRR repeat units follow at residues 277-301, 302-325, 326-349, 350-374, 376-398, 400-419, 420-444, 446-468, 469-494, 496-517, 518-541, 543-564, 565-591, and 592-615; these read STRL…LSQY, LNLI…LFTI, PTLE…NMSS, SSSL…VSQY, NLEE…ISKL, KLEY…PSWL, WRLT…GLDE, QVQW…ICKL, RSLE…SFMV, LTDL…FVNA, TKLL…LIHC, AMQL…WLGS, LPSL…SIGF, and QSLR…YFSS. N-linked (GlcNAc...) asparagine glycosylation is found at Asn313, Asn346, and Asn364. N-linked (GlcNAc...) asparagine glycosylation occurs at Asn429. N-linked (GlcNAc...) asparagine glycosylation is found at Asn482, Asn503, and Asn516. N-linked (GlcNAc...) asparagine glycosylation is found at Asn642, Asn673, and Asn697. LRR repeat units follow at residues 665 to 690, 691 to 714, 716 to 738, and 740 to 763; these read INEE…IGLL, KELR…LANL, KLEA…LGSL, and FMST…QFQG. N-linked (GlcNAc...) asparagine glycosylation is found at Asn745 and Asn765. Residues 810 to 830 form a helical membrane-spanning segment; it reads IAAGIAYGPGVVCGLVIGHIF. Over 831 to 860 the chain is Cytoplasmic; the sequence is LSHKHECWFMEKFRRKKPKVVTRIARPSKH.

Belongs to the RLP family.

The protein resides in the cell membrane. The protein is Receptor-like protein 31 of Arabidopsis thaliana (Mouse-ear cress).